The primary structure comprises 347 residues: S-adenosylmethionine:tRNA ribosyltransferase-isomerase (347 aa).

This sequence belongs to the QueA family. Monomer.

The protein localises to the cytoplasm. The enzyme catalyses 7-aminomethyl-7-carbaguanosine(34) in tRNA + S-adenosyl-L-methionine = epoxyqueuosine(34) in tRNA + adenine + L-methionine + 2 H(+). It participates in tRNA modification; tRNA-queuosine biosynthesis. Functionally, transfers and isomerizes the ribose moiety from AdoMet to the 7-aminomethyl group of 7-deazaguanine (preQ1-tRNA) to give epoxyqueuosine (oQ-tRNA). This Bordetella pertussis (strain Tohama I / ATCC BAA-589 / NCTC 13251) protein is S-adenosylmethionine:tRNA ribosyltransferase-isomerase.